We begin with the raw amino-acid sequence, 126 residues long: Small ribosomal subunit protein uS13 (126 aa).

The disordered stretch occupies residues 95–126 (GLPVRGQRTQTNARTRKGKKKTVAGKKKAGRK). The span at 108-126 (RTRKGKKKTVAGKKKAGRK) shows a compositional bias: basic residues.

It belongs to the universal ribosomal protein uS13 family. In terms of assembly, part of the 30S ribosomal subunit. Forms a loose heterodimer with protein S19. Forms two bridges to the 50S subunit in the 70S ribosome.

Its function is as follows. Located at the top of the head of the 30S subunit, it contacts several helices of the 16S rRNA. In the 70S ribosome it contacts the 23S rRNA (bridge B1a) and protein L5 of the 50S subunit (bridge B1b), connecting the 2 subunits; these bridges are implicated in subunit movement. Contacts the tRNAs in the A and P-sites. This Thermobifida fusca (strain YX) protein is Small ribosomal subunit protein uS13.